A 231-amino-acid chain; its full sequence is Orotate phosphoribosyltransferase (231 aa).

5-phospho-alpha-D-ribose 1-diphosphate contacts are provided by residues lysine 27, 79–80 (YK), arginine 106, lysine 107, lysine 110, histidine 112, and 133–141 (DDVMTAGTA). Orotate-binding residues include threonine 137 and arginine 166.

Belongs to the purine/pyrimidine phosphoribosyltransferase family. PyrE subfamily. As to quaternary structure, homodimer. The cofactor is Mg(2+).

It catalyses the reaction orotidine 5'-phosphate + diphosphate = orotate + 5-phospho-alpha-D-ribose 1-diphosphate. It functions in the pathway pyrimidine metabolism; UMP biosynthesis via de novo pathway; UMP from orotate: step 1/2. Catalyzes the transfer of a ribosyl phosphate group from 5-phosphoribose 1-diphosphate to orotate, leading to the formation of orotidine monophosphate (OMP). This Bifidobacterium longum (strain NCC 2705) protein is Orotate phosphoribosyltransferase.